The primary structure comprises 460 residues: MSGKSIFDKLWDRHVITGDEGQPQLMYVDQHYIHEVTSPQAFQGLRDAGRKVRRPDLTFGTFDHNVPTVNIFDIRDAISKAQIDKLAENVIEFGIDNASHGSDKQGIVHMVGPETGRTQPGKFIVCGDSHTATHGAFGTIAFGIGTSEVEHVFATQTLWQVKPKKMLVEFTGNPQKGIYSKDYILALIAKYGVACGVGYVVEYRGEAIDRLTMEERMTICNMSIEFGSKMGIMNPDQTTYDYMRGRECVPEDFDAAVADWKTLVSDDDAEYDKVIRMDVSELAPMVTWGTNPSMGVDFDTPFPEVRDMNDERAYHYMGLRPGQKAEDINLGYIFIGSCTNARLSDLQLAARIVKGKKISPNLTAIVVPGSRPVKRAAEKIGLDKIFKDAGFEWREPGCSMCLGMNPDKVPDGVHCASTSNRNFEDRQGFGAKTHLCSPAMAAAAAISGHFVDVRRMPEVQ.

Cys338, Cys398, and Cys401 together coordinate [4Fe-4S] cluster.

Belongs to the aconitase/IPM isomerase family. LeuC type 1 subfamily. Heterodimer of LeuC and LeuD. Requires [4Fe-4S] cluster as cofactor.

It carries out the reaction (2R,3S)-3-isopropylmalate = (2S)-2-isopropylmalate. It participates in amino-acid biosynthesis; L-leucine biosynthesis; L-leucine from 3-methyl-2-oxobutanoate: step 2/4. Functionally, catalyzes the isomerization between 2-isopropylmalate and 3-isopropylmalate, via the formation of 2-isopropylmaleate. In Streptococcus thermophilus (strain ATCC BAA-250 / LMG 18311), this protein is 3-isopropylmalate dehydratase large subunit.